The chain runs to 282 residues: Osteoclast-associated immunoglobulin-like receptor (282 aa).

An N-terminal signal peptide occupies residues 1 to 18; that stretch reads MALVLILQLLTLWPLCHT. 2 Ig-like domains span residues 22-116 and 126-219; these read PSVP…SQPS and ELPR…SWEG. An N-linked (GlcNAc...) asparagine glycan is attached at Asn-48. A disulfide bridge connects residues Cys-53 and Cys-100. Asn-145 carries N-linked (GlcNAc...) asparagine glycosylation. Positions 221–282 are disordered; the sequence is GPEARPASSA…PAPPPSDPGV (62 aa). The segment covering 273 to 282 has biased composition (pro residues); sequence PAPPPSDPGV.

This sequence belongs to the leukocyte receptor complex/polymeric immunoglobulin receptor (PIR/LRC) family.

Its subcellular location is the secreted. The protein localises to the cell membrane. Its function is as follows. Regulator of osteoclastogenesis which plays an important bone-specific function in osteoclast differentiation. This Homo sapiens (Human) protein is Osteoclast-associated immunoglobulin-like receptor (OSCAR).